A 75-amino-acid polypeptide reads, in one-letter code: Putative UPF0377 protein YJL222W-A (75 aa).

The protein belongs to the UPF0377 family.

This Saccharomyces cerevisiae (strain ATCC 204508 / S288c) (Baker's yeast) protein is Putative UPF0377 protein YJL222W-A.